The primary structure comprises 84 residues: UPF0386 protein R01313 (84 aa).

This sequence belongs to the UPF0386 family.

This is UPF0386 protein R01313 from Rhizobium meliloti (strain 1021) (Ensifer meliloti).